Reading from the N-terminus, the 473-residue chain is Sulfate adenylyltransferase subunit 1 (473 aa).

Residues 19 to 238 (KTLLKFLTCG…IKIKNSISSE (220 aa)) form the tr-type G domain. A G1 region spans residues 28–35 (GSVDDGKS). Residue 28-35 (GSVDDGKS) coordinates GTP. A G2 region spans residues 86 to 90 (GITID). Residues 107–110 (DTPG) are G3. Residues 107 to 111 (DTPGH) and 162 to 165 (NKMD) each bind GTP. Residues 162 to 165 (NKMD) are G4. A G5 region spans residues 200–202 (SAL).

The protein belongs to the TRAFAC class translation factor GTPase superfamily. Classic translation factor GTPase family. CysN/NodQ subfamily. Heterodimer composed of CysD, the smaller subunit, and CysN.

It catalyses the reaction sulfate + ATP + H(+) = adenosine 5'-phosphosulfate + diphosphate. It functions in the pathway sulfur metabolism; hydrogen sulfide biosynthesis; sulfite from sulfate: step 1/3. With CysD forms the ATP sulfurylase (ATPS) that catalyzes the adenylation of sulfate producing adenosine 5'-phosphosulfate (APS) and diphosphate, the first enzymatic step in sulfur assimilation pathway. APS synthesis involves the formation of a high-energy phosphoric-sulfuric acid anhydride bond driven by GTP hydrolysis by CysN coupled to ATP hydrolysis by CysD. In Buchnera aphidicola subsp. Acyrthosiphon pisum (strain Tuc7), this protein is Sulfate adenylyltransferase subunit 1.